The following is a 61-amino-acid chain: Photosystem II reaction center protein K (61 aa).

Residues 1 to 24 (MLNIFSLIWICLNSALYSSGFFFG) constitute a propeptide that is removed on maturation. The helical transmembrane segment at 36 to 56 (IIDFMPVIPVFFFLLAFVWQA) threads the bilayer.

Belongs to the PsbK family. As to quaternary structure, PSII is composed of 1 copy each of membrane proteins PsbA, PsbB, PsbC, PsbD, PsbE, PsbF, PsbH, PsbI, PsbJ, PsbK, PsbL, PsbM, PsbT, PsbX, PsbY, PsbZ, Psb30/Ycf12, at least 3 peripheral proteins of the oxygen-evolving complex and a large number of cofactors. It forms dimeric complexes.

The protein resides in the plastid. Its subcellular location is the chloroplast thylakoid membrane. Its function is as follows. One of the components of the core complex of photosystem II (PSII). PSII is a light-driven water:plastoquinone oxidoreductase that uses light energy to abstract electrons from H(2)O, generating O(2) and a proton gradient subsequently used for ATP formation. It consists of a core antenna complex that captures photons, and an electron transfer chain that converts photonic excitation into a charge separation. The chain is Photosystem II reaction center protein K from Coffea arabica (Arabian coffee).